A 451-amino-acid polypeptide reads, in one-letter code: Trigger factor (451 aa).

One can recognise a PPIase FKBP-type domain in the interval 173 to 258 (GDRVTLDFVG…LKKIEWAHLP (86 aa)).

The protein belongs to the FKBP-type PPIase family. Tig subfamily.

The protein localises to the cytoplasm. The enzyme catalyses [protein]-peptidylproline (omega=180) = [protein]-peptidylproline (omega=0). Involved in protein export. Acts as a chaperone by maintaining the newly synthesized protein in an open conformation. Functions as a peptidyl-prolyl cis-trans isomerase. The protein is Trigger factor of Cupriavidus pinatubonensis (strain JMP 134 / LMG 1197) (Cupriavidus necator (strain JMP 134)).